The chain runs to 291 residues: Formamidopyrimidine-DNA glycosylase (291 aa).

Proline 2 (schiff-base intermediate with DNA) is an active-site residue. The active-site Proton donor is glutamate 3. Lysine 58 acts as the Proton donor; for beta-elimination activity in catalysis. DNA contacts are provided by histidine 104, arginine 123, and lysine 166. An FPG-type zinc finger spans residues lysine 257–lysine 291. Arginine 281 serves as the catalytic Proton donor; for delta-elimination activity.

Belongs to the FPG family. As to quaternary structure, monomer. Zn(2+) serves as cofactor.

It catalyses the reaction Hydrolysis of DNA containing ring-opened 7-methylguanine residues, releasing 2,6-diamino-4-hydroxy-5-(N-methyl)formamidopyrimidine.. The enzyme catalyses 2'-deoxyribonucleotide-(2'-deoxyribose 5'-phosphate)-2'-deoxyribonucleotide-DNA = a 3'-end 2'-deoxyribonucleotide-(2,3-dehydro-2,3-deoxyribose 5'-phosphate)-DNA + a 5'-end 5'-phospho-2'-deoxyribonucleoside-DNA + H(+). Involved in base excision repair of DNA damaged by oxidation or by mutagenic agents. Acts as a DNA glycosylase that recognizes and removes damaged bases. Has a preference for oxidized purines, such as 7,8-dihydro-8-oxoguanine (8-oxoG). Has AP (apurinic/apyrimidinic) lyase activity and introduces nicks in the DNA strand. Cleaves the DNA backbone by beta-delta elimination to generate a single-strand break at the site of the removed base with both 3'- and 5'-phosphates. In Rhodopseudomonas palustris (strain ATCC BAA-98 / CGA009), this protein is Formamidopyrimidine-DNA glycosylase.